The following is a 333-amino-acid chain: E3 ubiquitin-protein ligase MIR1 (333 aa).

The RING-CH-type zinc-finger motif lies at methionine 1–arginine 60. The Cytoplasmic portion of the chain corresponds to methionine 1–glutamate 82. The Zn(2+) site is built by cysteine 9, cysteine 12, cysteine 24, cysteine 26, histidine 34, cysteine 37, cysteine 50, and cysteine 53. The chain crosses the membrane as a helical span at residues leucine 83–valine 103. The Extracellular portion of the chain corresponds to tryptophan 104–alanine 121. A helical membrane pass occupies residues alanine 122–phenylalanine 142. Topologically, residues histidine 143 to histidine 333 are cytoplasmic. The interval glycine 187–alanine 257 is disordered. Residues proline 195 to alanine 221 are compositionally biased toward low complexity. Basic and acidic residues predominate over residues alanine 235–asparagine 252.

As to quaternary structure, binds human MHC-I and CD1D.

Its subcellular location is the host cell membrane. The protein localises to the host endoplasmic reticulum. The enzyme catalyses [E2 ubiquitin-conjugating enzyme]-S-ubiquitinyl-L-cysteine + [acceptor protein]-L-cysteine = [E2 ubiquitin-conjugating enzyme]-L-cysteine + [acceptor protein]-S-ubiquitinyl-L-cysteine.. It functions in the pathway protein modification; protein ubiquitination. Membrane-bound E3 ubiquitin ligase expressed during late stages of lytic replication to mediate polyubiquitination of various host membrane proteins related to the immune response. Promotes ubiquitination and subsequent degradation of host MHC-I and CD1D molecules, DC-SIGN and DC-SIGNR, presumably to prevent lysis of infected cells by cytotoxic T-lymphocytes. Binds target molecules through transmembrane interaction. E3 ubiquitin-protein ligases accept ubiquitin from specific E2 ubiquitin-conjugating enzymes, and then transfer it to target protein. The result of this ubiquitination is the enhancement of the endocytosis of the target chain and the delivery to the lysosome, where it is proteolytically destroyed. Induces ubiquitination not only on lysines, but also on cysteine residues. This Human herpesvirus 8 type P (isolate GK18) (HHV-8) protein is E3 ubiquitin-protein ligase MIR1 (K3).